The primary structure comprises 33 residues: Cytochrome b6-f complex subunit 7 (33 aa).

Residues 5 to 25 (IFNTAVITFTLVLVGLGAGYL) traverse the membrane as a helical segment.

The protein belongs to the PetM family. As to quaternary structure, the 4 large subunits of the cytochrome b6-f complex are cytochrome b6, subunit IV (17 kDa polypeptide, PetD), cytochrome f and the Rieske protein, while the 4 small subunits are PetG, PetL, PetM and PetN. The complex functions as a dimer.

It is found in the cellular thylakoid membrane. Functionally, component of the cytochrome b6-f complex, which mediates electron transfer between photosystem II (PSII) and photosystem I (PSI), cyclic electron flow around PSI, and state transitions. The chain is Cytochrome b6-f complex subunit 7 from Thermosynechococcus vestitus (strain NIES-2133 / IAM M-273 / BP-1).